The chain runs to 595 residues: Elongation factor 4 (595 aa).

The region spanning 2 to 184 (SHIRNFSIIA…RLVATIPAPT (183 aa)) is the tr-type G domain. GTP is bound by residues 14–19 (DHGKST) and 131–134 (NKMD).

This sequence belongs to the TRAFAC class translation factor GTPase superfamily. Classic translation factor GTPase family. LepA subfamily.

The protein resides in the cell inner membrane. It carries out the reaction GTP + H2O = GDP + phosphate + H(+). Its function is as follows. Required for accurate and efficient protein synthesis under certain stress conditions. May act as a fidelity factor of the translation reaction, by catalyzing a one-codon backward translocation of tRNAs on improperly translocated ribosomes. Back-translocation proceeds from a post-translocation (POST) complex to a pre-translocation (PRE) complex, thus giving elongation factor G a second chance to translocate the tRNAs correctly. Binds to ribosomes in a GTP-dependent manner. The chain is Elongation factor 4 from Pseudomonas savastanoi pv. phaseolicola (strain 1448A / Race 6) (Pseudomonas syringae pv. phaseolicola (strain 1448A / Race 6)).